Here is a 226-residue protein sequence, read N- to C-terminus: ATP synthase F(0) complex subunit a (226 aa).

Transmembrane regions (helical) follow at residues 12–32 (PTILGLPAAVPIILFPSLLIP), 68–88 (WSLMLISLITFIATTNLLGLL), 97–117 (QLSMNLAMAIPLWAGTVATGF), 138–158 (IPMLIIIETISLFIQPVALAV), 164–184 (ITAGHLLMHLIGAATMALSTI), and 200–222 (TTLEIAVALIQAYVFTLLVSLYL).

It belongs to the ATPase A chain family. Component of the ATP synthase complex composed at least of ATP5F1A/subunit alpha, ATP5F1B/subunit beta, ATP5MC1/subunit c (homooctomer), MT-ATP6/subunit a, MT-ATP8/subunit 8, ATP5ME/subunit e, ATP5MF/subunit f, ATP5MG/subunit g, ATP5MK/subunit k, ATP5MJ/subunit j, ATP5F1C/subunit gamma, ATP5F1D/subunit delta, ATP5F1E/subunit epsilon, ATP5PF/subunit F6, ATP5PB/subunit b, ATP5PD/subunit d, ATP5PO/subunit OSCP. ATP synthase complex consists of a soluble F(1) head domain (subunits alpha(3) and beta(3)) - the catalytic core - and a membrane F(0) domain - the membrane proton channel (subunits c, a, 8, e, f, g, k and j). These two domains are linked by a central stalk (subunits gamma, delta, and epsilon) rotating inside the F1 region and a stationary peripheral stalk (subunits F6, b, d, and OSCP). Interacts with DNAJC30; interaction is direct.

The protein localises to the mitochondrion inner membrane. The catalysed reaction is H(+)(in) = H(+)(out). Functionally, subunit a, of the mitochondrial membrane ATP synthase complex (F(1)F(0) ATP synthase or Complex V) that produces ATP from ADP in the presence of a proton gradient across the membrane which is generated by electron transport complexes of the respiratory chain. ATP synthase complex consist of a soluble F(1) head domain - the catalytic core - and a membrane F(1) domain - the membrane proton channel. These two domains are linked by a central stalk rotating inside the F(1) region and a stationary peripheral stalk. During catalysis, ATP synthesis in the catalytic domain of F(1) is coupled via a rotary mechanism of the central stalk subunits to proton translocation. With the subunit c (ATP5MC1), forms the proton-conducting channel in the F(0) domain, that contains two crucial half-channels (inlet and outlet) that facilitate proton movement from the mitochondrial intermembrane space (IMS) into the matrix. Protons are taken up via the inlet half-channel and released through the outlet half-channel, following a Grotthuss mechanism. This Hylobates lar (Lar gibbon) protein is ATP synthase F(0) complex subunit a.